A 274-amino-acid chain; its full sequence is MASTFIPGLNPQNPHYIPGYTGHCPLLRFSMGQTYGQMTGQLLRGSPGLAWPPAHRTLLPPIQPPRSPEPRRRSLPVRPGHERLSSSMVPGYTGFVPQAQFIFAKNCSQVWAEALNGFTQRNGGQGSQELPKEAKGEKDVEKDQEPKPEVEKEPELGQEAEQASPYSMDDRDPRKFFMSGFTGYVPRARFLFGSSFPVLSNQALQEFGEMKSPGRSQKDPKHLPALSRTYPQHLGLLPKYGGYVPGYKFQFGRTYGHLTQDALGLSTLQKQLLV.

Disordered regions lie at residues 46 to 89 and 119 to 171; these read SPGL…SSMV and TQRN…MDDR. Residues 130-155 show a composition bias toward basic and acidic residues; sequence LPKEAKGEKDVEKDQEPKPEVEKEPE.

The protein belongs to the CIMIP2 family. As to quaternary structure, microtubule inner protein component of sperm flagellar doublet microtubules. As to expression, expressed in trachea multiciliated cells.

It is found in the cytoplasm. Its subcellular location is the cytoskeleton. The protein resides in the cilium axoneme. The protein localises to the flagellum axoneme. In terms of biological role, microtubule inner protein (MIP) part of the dynein-decorated doublet microtubules (DMTs) in cilia axoneme, which is required for motile cilia beating. This Bos taurus (Bovine) protein is Ciliary microtubule inner protein 2B (CIMIP2B).